A 299-amino-acid polypeptide reads, in one-letter code: Taste receptor type 2 member 50 (299 aa).

Residue Met1 is a topological domain, extracellular. A helical membrane pass occupies residues 2-22 (ITFLYIFFSILIMVLFVLGNF). Residues 23–55 (ANGFIALVNFIDWVKRKKISSADQILTALAVSR) lie on the Cytoplasmic side of the membrane. Residues 56–76 (IGLLWTLLLNWYLTVLNPAFY) traverse the membrane as a helical segment. Topologically, residues 77 to 87 (SVELRITSYNA) are extracellular. The helical transmembrane segment at 88 to 108 (WVVTNHFSMWLAASLSIFYLL) threads the bilayer. Residues 109 to 126 (KIANFSNLIFLHLKRRVR) lie on the Cytoplasmic side of the membrane. The chain crosses the membrane as a helical span at residues 127–147 (SVILVILLGTLIFLVCHLLVA). At 148–181 (NMDESMWAEEYEGNITGKMKLRNTVHLSYLTVTT) the chain is on the extracellular side. Asn161 carries an N-linked (GlcNAc...) asparagine glycan. Residues 182–202 (LWSFIPFTLSLISFLMLICSL) traverse the membrane as a helical segment. The Cytoplasmic portion of the chain corresponds to 203-229 (CKHLKKMQLHGEGSQDLSTKVHIKALQ). A helical transmembrane segment spans residues 230 to 250 (TLISFLLLCAIFFLFLIISVW). The Extracellular segment spans residues 251–259 (SPRRLRNDP). The helical transmembrane segment at 260–280 (VVMVSKAVGNIYLAFDSFILI) threads the bilayer. The Cytoplasmic portion of the chain corresponds to 281–299 (WRTKKLKHTFLLILCQIRC).

The protein belongs to the G-protein coupled receptor T2R family.

Its subcellular location is the membrane. In terms of biological role, receptor that may play a role in the perception of bitterness and is gustducin-linked. May play a role in sensing the chemical composition of the gastrointestinal content. The activity of this receptor may stimulate alpha gustducin, mediate PLC-beta-2 activation and lead to the gating of TRPM5. This is Taste receptor type 2 member 50 (TAS2R50) from Pan paniscus (Pygmy chimpanzee).